Consider the following 182-residue polypeptide: NADH-quinone oxidoreductase subunit I (182 aa).

2 4Fe-4S ferredoxin-type domains span residues 52–82 and 92–121; these read LTRD…LQKA and EFFR…LTPD. Residues C62, C65, C68, C72, C101, C104, C107, and C111 each contribute to the [4Fe-4S] cluster site.

This sequence belongs to the complex I 23 kDa subunit family. In terms of assembly, NDH-1 is composed of 13 different subunits. Subunits NuoA, H, J, K, L, M, N constitute the membrane sector of the complex. Requires [4Fe-4S] cluster as cofactor.

The protein localises to the cell inner membrane. The enzyme catalyses a quinone + NADH + 5 H(+)(in) = a quinol + NAD(+) + 4 H(+)(out). In terms of biological role, NDH-1 shuttles electrons from NADH, via FMN and iron-sulfur (Fe-S) centers, to quinones in the respiratory chain. The immediate electron acceptor for the enzyme in this species is believed to be ubiquinone. Couples the redox reaction to proton translocation (for every two electrons transferred, four hydrogen ions are translocated across the cytoplasmic membrane), and thus conserves the redox energy in a proton gradient. This chain is NADH-quinone oxidoreductase subunit I, found in Pseudomonas entomophila (strain L48).